We begin with the raw amino-acid sequence, 571 residues long: Proline--tRNA ligase (571 aa).

The protein belongs to the class-II aminoacyl-tRNA synthetase family. ProS type 1 subfamily. In terms of assembly, homodimer.

It localises to the cytoplasm. The enzyme catalyses tRNA(Pro) + L-proline + ATP = L-prolyl-tRNA(Pro) + AMP + diphosphate. In terms of biological role, catalyzes the attachment of proline to tRNA(Pro) in a two-step reaction: proline is first activated by ATP to form Pro-AMP and then transferred to the acceptor end of tRNA(Pro). As ProRS can inadvertently accommodate and process non-cognate amino acids such as alanine and cysteine, to avoid such errors it has two additional distinct editing activities against alanine. One activity is designated as 'pretransfer' editing and involves the tRNA(Pro)-independent hydrolysis of activated Ala-AMP. The other activity is designated 'posttransfer' editing and involves deacylation of mischarged Ala-tRNA(Pro). The misacylated Cys-tRNA(Pro) is not edited by ProRS. In Pseudomonas fluorescens (strain Pf0-1), this protein is Proline--tRNA ligase.